A 154-amino-acid polypeptide reads, in one-letter code: Vimentin (154 aa).

Positions 1-13 are enriched in low complexity; that stretch reads MSTRSVSSSSYRR. Positions 1–31 are disordered; it reads MSTRSVSSSSYRRMFGGPGTASRPSSTRSYV. Ser2 is modified (N-acetylserine). The tract at residues 2-95 is head; the sequence is STRSVSSSSY…FSLADAINTE (94 aa). Position 5 is a phosphoserine (Ser5). Ser7 carries the phosphoserine; by PKA and PKC; alternate modification. Ser7 is a glycosylation site (O-linked (GlcNAc) serine; alternate). Residue Ser8 is modified to Phosphoserine. Residues Ser9 and Ser10 each carry the phosphoserine; by PKC modification. A Phosphothreonine modification is found at Thr20. The residue at position 25 (Ser25) is a Phosphoserine; by PKA and PKC. A Phosphoserine; by PKC modification is found at Ser26. Thr33 is a glycosylation site (O-linked (GlcNAc) threonine). A glycan (O-linked (GlcNAc) serine; alternate) is linked at Ser34. Ser34 is modified (phosphoserine; by PKC; alternate). Ser39 carries the phosphoserine; by CaMK2, PKA, PKC and ROCK2 modification. Ser42 carries the phosphoserine; by PKC modification. Phosphoserine is present on Ser49. A Phosphotyrosine modification is found at Tyr53. A Phosphoserine modification is found at Ser55. Ser56 carries the post-translational modification Phosphoserine; by CDK5 and CDK1. Tyr61 carries the post-translational modification Phosphotyrosine. A Phosphoserine; by PKA and PKC modification is found at Ser66. The residue at position 72 (Ser72) is a Phosphoserine; by AURKB and ROCK2. Ser83 is modified (phosphoserine; by CaMK2). At Ser87 the chain carries Phosphoserine. Residues 96–131 form a coil 1A region; that stretch reads FKNTRTNEKVELQELNDRFANYIDKVRFLEQQNKIL. The stretch at 96–131 forms a coiled coil; sequence FKNTRTNEKVELQELNDRFANYIDKVRFLEQQNKIL. The IF rod domain occupies 103-154; that stretch reads EKVELQELNDRFANYIDKVRFLEQQNKILLAELEQLKGQGKSRLGHLYEEEM. Lys104 participates in a covalent cross-link: Glycyl lysine isopeptide (Lys-Gly) (interchain with G-Cter in SUMO2). Tyr117 carries the post-translational modification Phosphotyrosine. An N6-acetyllysine; alternate mark is found at Lys120, Lys129, and Lys139. An N6-succinyllysine; alternate mark is found at Lys120 and Lys129. Residues Lys120, Lys129, and Lys139 each participate in a glycyl lysine isopeptide (Lys-Gly) (interchain with G-Cter in SUMO2); alternate cross-link. The linker 1 stretch occupies residues 132–153; that stretch reads LAELEQLKGQGKSRLGHLYEEE. Phosphoserine is present on Ser144. Met154 is a region of interest (coil 1B).

It belongs to the intermediate filament family. Homomer assembled from elementary dimers. Identified in complexes that contain VIM, EZR, AHNAK, BFSP1, BFSP2, ANK2, PLEC, PRX and spectrin. Interacts with BCAS3. Interacts with LGSN. Interacts with SYNM. Interacts (via rod region) with PLEC (via CH 1 domain). Interacts with STK33. Interacts with LARP6. Interacts with RAB8B. Interacts with TOR1A; the interaction associates TOR1A with the cytoskeleton. Interacts with TOR1AIP1. Interacts with TOR1AIP1. Interacts with DIAPH1. Interacts with EPPK1; interaction is dependent of higher-order structure of intermediate filament. Interacts with the non-receptor tyrosine kinase SRMS; the interaction leads to phosphorylation of VIM. Interacts with NOD2. Interacts (via head region) with CORO1C. Interacts with HDGF. Interacts with PRKCE (via phorbol-ester/DAG-type 2 domain). Interacts with BFSP2. Interacts with PPL. Interacts with PKP1 and PKP2. Interacts with SCRIB (via PDZ domains); the interaction protects SCRIB from proteasomal degradation and facilitates SCRIB localization to intermediate filaments, the interaction is reduced by cell contact inhibition. Post-translationally, one of the most prominent phosphoproteins in various cells of mesenchymal origin. Phosphorylation is enhanced during cell division, at which time vimentin filaments are significantly reorganized. Phosphorylation by PKN1 inhibits the formation of filaments. Filament disassembly during mitosis is promoted by phosphorylation at Ser-55 as well as by nestin. Phosphorylated at Ser-56 by CDK5 during neutrophil secretion in the cytoplasm. Phosphorylated by STK33. Phosphorylated on tyrosine residues by SRMS.

The protein localises to the cytoplasm. It localises to the cytoskeleton. It is found in the nucleus matrix. Its subcellular location is the cell membrane. In terms of biological role, vimentins are class-III intermediate filaments found in various non-epithelial cells, especially mesenchymal cells. Vimentin is attached to the nucleus, endoplasmic reticulum, and mitochondria, either laterally or terminally. Plays a role in cell directional movement, orientation, cell sheet organization and Golgi complex polarization at the cell migration front. Protects SCRIB from proteasomal degradation and facilitates its localization to intermediate filaments in a cell contact-mediated manner. Involved with LARP6 in the stabilization of type I collagen mRNAs for CO1A1 and CO1A2. The chain is Vimentin (VIM) from Ovis aries (Sheep).